Reading from the N-terminus, the 689-residue chain is Ribonuclease J (689 aa).

The interval 1–88 (MTDNNQNNEN…RNYAQEELDS (88 aa)) is disordered. Residues 9 to 24 (ENHENSSENSKADEMR) are compositionally biased toward basic and acidic residues. Residues 56-78 (HHKKEHRPNKKPNNHHKQKHAKT) are compositionally biased toward basic residues. K132 and K138 each carry N6-acetyllysine. The Zn(2+) site is built by H206, H208, D210, H211, H275, and D297. N6-acetyllysine is present on residues K321, K335, and K395. 498–502 (HVSGH) serves as a coordination point for substrate. The residue at position 509 (K509) is an N6-acetyllysine. Residue H524 coordinates Zn(2+). K545, K632, and K647 each carry N6-acetyllysine.

This sequence belongs to the metallo-beta-lactamase superfamily. RNA-metabolizing metallo-beta-lactamase-like family. Bacterial RNase J subfamily. As to quaternary structure, homodimer. Homotetramer; dimer of homodimers. Interacts with RNA helicase RhpA, might be a member of a minimal RNA degradosome complex. Requires Zn(2+) as cofactor. Acetylated on nine lysine residues. Some of the residues are acetylated by multiple different mechanisms. RimL is partially responsible for the acetylation of Lys-321, Lys-395 and Lys-647. HPB8_1270 homolog is partially responsible for the acetylation of Lys-321, Lys-395, Lys-509 and Lys-647. Acetyl-phosphate-mediated non-enzymatic acetylation pathway takes part in the acetylation of Lys-132, Lys-321, Lys-395, Lys-509 and Lys-647. Acetylation of the remaining residues Lys-138, Lys-335, Lys-545 and Lys-632 occurs by a yet undetermined mechanism. Acetylation on a number of these residues is important for growth regulation and proper cell morphology.

The protein resides in the cytoplasm. Catalytic activity is regulated by the balance between homodimers and homotetramers, with homotetramers being the active forms of this enzyme. Acetylation allosterically regulates the homooligomerization state and hence the catalytic activity. Its function is as follows. An RNase that has 5'-3' exoribonuclease and endoribonuclease activity. Degrades 5'-monophosphorylated ssRNA and dsRNA, considerably more active on ssRNA. Association with RhpA significantly increases the dsRNase activity. Degrades RNA substrate with hairpin structures at both ends with low activity, but presence of RhpA significantly increases the activity on this substrate. Stimulates ATPase activity of RNA helicase RhpA. Involved in stabilization of mRNA but apparently not rRNA. The polypeptide is Ribonuclease J (Helicobacter pylori (strain ATCC 700392 / 26695) (Campylobacter pylori)).